The primary structure comprises 131 residues: Bypass of stop codon protein 4 (131 aa).

The polypeptide is Bypass of stop codon protein 4 (BSC4) (Saccharomyces cerevisiae (strain ATCC 204508 / S288c) (Baker's yeast)).